Reading from the N-terminus, the 189-residue chain is Flavin prenyltransferase UbiX (189 aa).

FMN-binding positions include 10 to 12 (GAS), Ser-37, 88 to 91 (SIKT), and Arg-123. The dimethylallyl phosphate site is built by Tyr-153 and Arg-169.

The protein belongs to the UbiX/PAD1 family.

The catalysed reaction is dimethylallyl phosphate + FMNH2 = prenylated FMNH2 + phosphate. It functions in the pathway cofactor biosynthesis; ubiquinone biosynthesis. Its function is as follows. Flavin prenyltransferase that catalyzes the synthesis of the prenylated FMN cofactor (prenyl-FMN) for 4-hydroxy-3-polyprenylbenzoic acid decarboxylase UbiD. The prenyltransferase is metal-independent and links a dimethylallyl moiety from dimethylallyl monophosphate (DMAP) to the flavin N5 and C6 atoms of FMN. This chain is Flavin prenyltransferase UbiX, found in Salmonella typhi.